The following is a 124-amino-acid chain: Small ribosomal subunit protein uS12 (124 aa).

The disordered stretch occupies residues 9-28; the sequence is KSERTVQKNQTKSPALDSCP. Aspartate 89 bears the 3-methylthioaspartic acid mark.

This sequence belongs to the universal ribosomal protein uS12 family. As to quaternary structure, part of the 30S ribosomal subunit. Contacts proteins S8 and S17. May interact with IF1 in the 30S initiation complex.

In terms of biological role, with S4 and S5 plays an important role in translational accuracy. Interacts with and stabilizes bases of the 16S rRNA that are involved in tRNA selection in the A site and with the mRNA backbone. Located at the interface of the 30S and 50S subunits, it traverses the body of the 30S subunit contacting proteins on the other side and probably holding the rRNA structure together. The combined cluster of proteins S8, S12 and S17 appears to hold together the shoulder and platform of the 30S subunit. This chain is Small ribosomal subunit protein uS12, found in Bdellovibrio bacteriovorus (strain ATCC 15356 / DSM 50701 / NCIMB 9529 / HD100).